Here is a 367-residue protein sequence, read N- to C-terminus: GMP synthase [glutamine-hydrolyzing] subunit B (367 aa).

The GMPS ATP-PPase domain occupies 2–190; the sequence is FDPASFVEEI…LKLPKEISER (189 aa). 29 to 35 lines the ATP pocket; sequence SGGVDST.

As to quaternary structure, heterodimer composed of a glutamine amidotransferase subunit (A) and a GMP-binding subunit (B).

It carries out the reaction XMP + L-glutamine + ATP + H2O = GMP + L-glutamate + AMP + diphosphate + 2 H(+). It participates in purine metabolism; GMP biosynthesis; GMP from XMP (L-Gln route): step 1/1. Catalyzes the synthesis of GMP from XMP. The polypeptide is GMP synthase [glutamine-hydrolyzing] subunit B (guaAB) (Saccharolobus solfataricus (strain ATCC 35092 / DSM 1617 / JCM 11322 / P2) (Sulfolobus solfataricus)).